The primary structure comprises 200 residues: Protein GrpE (200 aa).

Belongs to the GrpE family. As to quaternary structure, homodimer.

The protein resides in the cytoplasm. Functionally, participates actively in the response to hyperosmotic and heat shock by preventing the aggregation of stress-denatured proteins, in association with DnaK and GrpE. It is the nucleotide exchange factor for DnaK and may function as a thermosensor. Unfolded proteins bind initially to DnaJ; upon interaction with the DnaJ-bound protein, DnaK hydrolyzes its bound ATP, resulting in the formation of a stable complex. GrpE releases ADP from DnaK; ATP binding to DnaK triggers the release of the substrate protein, thus completing the reaction cycle. Several rounds of ATP-dependent interactions between DnaJ, DnaK and GrpE are required for fully efficient folding. In Mycoplasma mycoides subsp. mycoides SC (strain CCUG 32753 / NCTC 10114 / PG1), this protein is Protein GrpE.